Reading from the N-terminus, the 449-residue chain is Putative methylthiotransferase MJ0865 (449 aa).

The 228-residue stretch at 163–390 (SIRGANVYIE…EGEYRKLGLS (228 aa)) folds into the Radical SAM core domain. [4Fe-4S] cluster-binding residues include C177, C181, and C184.

This sequence belongs to the methylthiotransferase family. [4Fe-4S] cluster serves as cofactor.

The chain is Putative methylthiotransferase MJ0865 from Methanocaldococcus jannaschii (strain ATCC 43067 / DSM 2661 / JAL-1 / JCM 10045 / NBRC 100440) (Methanococcus jannaschii).